The primary structure comprises 110 residues: Secreted RxLR effector protein 89 (110 aa).

Positions 1 to 22 (MTSVVIVVSVAVLLGVLVITDS) are cleaved as a signal peptide. An N-linked (GlcNAc...) asparagine glycan is attached at asparagine 29. A RxLR-dEER motif is present at residues 61–74 (RHLRTILQWWQERR).

This sequence belongs to the RxLR effector family.

The protein localises to the secreted. It is found in the host nucleus. It localises to the host cytoplasm. Functionally, secreted effector that completely suppresses the host cell death induced by cell death-inducing proteins. The polypeptide is Secreted RxLR effector protein 89 (Plasmopara viticola (Downy mildew of grapevine)).